The following is a 313-amino-acid chain: Protoheme IX farnesyltransferase (313 aa).

8 helical membrane passes run 32–52, 53–73, 120–140, 153–173, 180–200, 226–246, 248–268, and 284–304; these read VMSL…GDFH, PVLA…AGAL, ILVN…YVVI, IVIG…AVTG, LLLF…LALF, ILLY…LGYF, AIYG…ALRV, and LFKF…LEVV.

Belongs to the UbiA prenyltransferase family. Protoheme IX farnesyltransferase subfamily.

Its subcellular location is the cell inner membrane. The catalysed reaction is heme b + (2E,6E)-farnesyl diphosphate + H2O = Fe(II)-heme o + diphosphate. It functions in the pathway porphyrin-containing compound metabolism; heme O biosynthesis; heme O from protoheme: step 1/1. In terms of biological role, converts heme B (protoheme IX) to heme O by substitution of the vinyl group on carbon 2 of heme B porphyrin ring with a hydroxyethyl farnesyl side group. The sequence is that of Protoheme IX farnesyltransferase from Rhodopseudomonas palustris (strain HaA2).